The following is a 382-amino-acid chain: PqqA peptide cyclase (382 aa).

The region spanning valine 8–alanine 223 is the Radical SAM core domain. [4Fe-4S] cluster is bound by residues cysteine 22, cysteine 26, and cysteine 29.

Belongs to the radical SAM superfamily. PqqE family. Interacts with PqqD. The interaction is necessary for activity of PqqE. [4Fe-4S] cluster is required as a cofactor.

It catalyses the reaction [PQQ precursor protein] + S-adenosyl-L-methionine = E-Y cross-linked-[PQQ precursor protein] + 5'-deoxyadenosine + L-methionine + H(+). It functions in the pathway cofactor biosynthesis; pyrroloquinoline quinone biosynthesis. Catalyzes the cross-linking of a glutamate residue and a tyrosine residue in the PqqA protein as part of the biosynthesis of pyrroloquinoline quinone (PQQ). The chain is PqqA peptide cyclase from Erwinia tasmaniensis (strain DSM 17950 / CFBP 7177 / CIP 109463 / NCPPB 4357 / Et1/99).